The chain runs to 202 residues: FMN-dependent NADH:quinone oxidoreductase 1 (202 aa).

Residues Ser9, 15-17 (SAS), 95-98 (MYNF), and 139-142 (TSGG) each bind FMN.

It belongs to the azoreductase type 1 family. As to quaternary structure, homodimer. Requires FMN as cofactor.

The catalysed reaction is 2 a quinone + NADH + H(+) = 2 a 1,4-benzosemiquinone + NAD(+). The enzyme catalyses N,N-dimethyl-1,4-phenylenediamine + anthranilate + 2 NAD(+) = 2-(4-dimethylaminophenyl)diazenylbenzoate + 2 NADH + 2 H(+). In terms of biological role, quinone reductase that provides resistance to thiol-specific stress caused by electrophilic quinones. Functionally, also exhibits azoreductase activity. Catalyzes the reductive cleavage of the azo bond in aromatic azo compounds to the corresponding amines. This is FMN-dependent NADH:quinone oxidoreductase 1 from Pseudomonas syringae pv. tomato (strain ATCC BAA-871 / DC3000).